The sequence spans 462 residues: MVVTQLSLEFRFQGKKLRGFSCELTRSPHGVLPESVLSTTCQVAIPILLSGLGMMTAGLVMNTVQHWPVFRDVKDLLTLVPPLVGLKGNLEMTLASRLSTSANTGQIDDRQERYRIISSNLAVVQVQATVVGLLAAVASLMLGTVSHEEFDWAKVALLCTSSVITAFLAALALGILMICIVIGARKFGVNPDNIATPIAASLGDLITLSILALMSSFFYSHRDTWYLTPLVCIGFLALTPLWIFIAKQNPPIMKILKYGWFPIILAMIISSFGGLILSKTISKHQFKGMAVLTPVICGVGGNLVAIQTSRISTFLHMWSTPGVLPVQMKRFWPNPCFTFCSSEINSVSARVLLFLVVPGHLIFFYLICLVEGQSVTSSKIFVLLYLMAGMMQVVILLYLAEVMVRLTWHQALDPDNHCIPYLTGLGDLLGTSLLALCFLLDWLLRGRANLAELVSELVSVPP.

A run of 9 helical transmembrane segments spans residues 41 to 61 (CQVAIPILLSGLGMMTAGLVM), 121 to 141 (LAVVQVQATVVGLLAAVASLM), 163 to 183 (VITAFLAALALGILMICIVIG), 194 to 214 (IATPIAASLGDLITLSILALM), 225 to 245 (WYLTPLVCIGFLALTPLWIFI), 258 to 278 (YGWFPIILAMIISSFGGLILS), 351 to 371 (VLLFLVVPGHLIFFYLICLVE), 380 to 400 (IFVLLYLMAGMMQVVILLYLA), and 424 to 444 (GLGDLLGTSLLALCFLLDWLL).

It belongs to the SLC41A transporter family.

The protein resides in the mitochondrion inner membrane. The catalysed reaction is Mg(2+)(in) + 2 Na(+)(out) = Mg(2+)(out) + 2 Na(+)(in). Na(+)/Mg(2+) ion exchanger that acts as a predominant Mg(2+) efflux system at the mitochondrial inner membrane. This Rattus norvegicus (Rat) protein is Solute carrier family 41 member 3 (Slc41a3).